The chain runs to 358 residues: DnaJ homolog subfamily C member 18 (358 aa).

A J domain is found at 82 to 146 (NYYEILGVSR…DKRLRYDEYG (65 aa)). The chain crosses the membrane as a helical span at residues 228–248 (AFIQLLPVLVIVIISVITQLL).

The protein resides in the endoplasmic reticulum membrane. This is DnaJ homolog subfamily C member 18 (DNAJC18) from Bos taurus (Bovine).